The following is a 419-amino-acid chain: Histidine--tRNA ligase (419 aa).

It belongs to the class-II aminoacyl-tRNA synthetase family. As to quaternary structure, homodimer.

It is found in the cytoplasm. It catalyses the reaction tRNA(His) + L-histidine + ATP = L-histidyl-tRNA(His) + AMP + diphosphate + H(+). This chain is Histidine--tRNA ligase, found in Mycoplasmoides gallisepticum (strain R(low / passage 15 / clone 2)) (Mycoplasma gallisepticum).